Consider the following 310-residue polypeptide: UDP-N-acetylenolpyruvoylglucosamine reductase (310 aa).

The region spanning 31–216 (KIGGPADYFV…LRKIEELNQA (186 aa)) is the FAD-binding PCMH-type domain. Residue R180 is part of the active site. Residue S230 is the Proton donor of the active site. Residue E300 is part of the active site.

Belongs to the MurB family. Requires FAD as cofactor.

The protein resides in the cytoplasm. It carries out the reaction UDP-N-acetyl-alpha-D-muramate + NADP(+) = UDP-N-acetyl-3-O-(1-carboxyvinyl)-alpha-D-glucosamine + NADPH + H(+). The protein operates within cell wall biogenesis; peptidoglycan biosynthesis. Its function is as follows. Cell wall formation. The protein is UDP-N-acetylenolpyruvoylglucosamine reductase of Lachnoclostridium phytofermentans (strain ATCC 700394 / DSM 18823 / ISDg) (Clostridium phytofermentans).